The sequence spans 360 residues: Peptide chain release factor 1 (360 aa).

The residue at position 237 (Gln237) is an N5-methylglutamine.

It belongs to the prokaryotic/mitochondrial release factor family. In terms of processing, methylated by PrmC. Methylation increases the termination efficiency of RF1.

It is found in the cytoplasm. Its function is as follows. Peptide chain release factor 1 directs the termination of translation in response to the peptide chain termination codons UAG and UAA. The protein is Peptide chain release factor 1 of Pseudomonas syringae pv. syringae (strain B728a).